Reading from the N-terminus, the 1659-residue chain is MMAQFPTAMNGGPNMWAITSEERTKHDKQFDNLKPSGGYITGDQARTFFLQSGLPAPVLAEIWALSDLNKDGKMDQQEFSIAMKLIKLKLQGQQLPVVLPPIMKQPPMFSPLISARFGMGSMPNLSIHQPLPPVAPIATPLSSATSGTSIPPLMMPAPLVPSVSTSSLPNGTASLIQPLSIPYSSSTLPHASSYSLMMGGFGGASIQKAQSLIDLGSSSSTSSTASLSGNSPKTGTSEWAVPQPSRLKYRQKFNSLDKGMSGYLSGFQARNALLQSNLSQTQLATIWTLADIDGDGQLKAEEFILAMHLTDMAKAGQPLPLTLPPELVPPSFRGGKQVDSVNGTLPSYQKTQEEEPQKKLPVTFEDKRKANYERGNMELEKRRQVLMEQQQREAERKAQKEKEEWERKQRELQEQEWKKQLELEKRLEKQRELERQREEERRKEIERREAAKQELERQRRLEWERLRRQELLSQKTREQEDIVRLSSRKKSLHLELEAVNGKHQQISGRLQDVQIRKQTQKTELEVLDKQCDLEIMEIKQLQQELKEYQNKLIYLVPEKQLLNERIKNMQLSNTPDSGISLLHKKSSEKEELCQRLKEQLDALEKETASKLSEMDSFNNQLKELRESYNTQQLALEQLHKIKRDKLKEIERKRLEQIQKKKLEDEAARKAKQGKENLWRESIRKEEEEKQKRLQEEKSQDKTQEEERKAEAKQSETASALVNYRALYPFEARNHDEMSFSSGDIIQVDEKTVGEPGWLYGSFQGKFGWFPCNYVEKVLSSEKALSPKKALLPPTVSLSATSTSSQPPASVTDYHNVSFSNLTVNTTWQQKSAFTRTVSPGSVSPIHGQGQAVENLKAQALCSWTAKKENHLNFSKHDVITVLEQQENWWFGEVHGGRGWFPKSYVKLIPGNEVQRGEPEALYAAVTKKPTSTAYPVTSTAYPVGEDYIALYSYSSVEPGDLTFTEGEEILVTQKDGEWWTGSIGERTGIFPSNYVRPKDQENFGNASKSGASNKKPEIAQVTSAYAASGTEQLSLAPGQLILILKKNTSGWWQGELQARGKKRQKGWFPASHVKLLGPSSERTMPTFHAVCQVIAMYDYMANNEDELNFSKGQLINVMNKDDPDWWQGETNGLTGLFPSNYVKMTTDSDPSQQWCADLQALDTMQPTERKRQGYIHELIQTEERYMDDDLQLVIEVFQKRMAEEGFLTEADMALIFVNWKELIMSNTKLLRALRVRKKTGGEKMPVQMIGDILAAELSHMQAYIRFCSCQLNGATLLQQKTDEDTDFKEFLKKLASDPRCKGMPLSSFLLKPMQRITRYPLLIRSILENTPQSHVDHSSLKLALERAEELCSQVNEGVREKENSDRLEWIQAHVQCEGLAEQLIFNSLTNCLGPRKLLHSGKLYKTKSNKELHAFLFNDFLLLTYLVRQFAAASGHEKLFNSKSSAQFRMYKTPIFLNEVLVKLPTDPSGDEPVFHISHIDRVYTLRTDNINERTAWVQKIKGASEQYIDTEKKKREKAYQARSQKTSGIGRLMVHVIEATELKACKPNGKSNPYCEVSMGSQSYTTRTLQDTLNPKWNFNCQFFIKDLYQDVLCLTMFDRDQFSPDDFLGRTEVPVAKIRTEQESKGPTTRRLLLHEVPTGEVWVRFDLQLFEQKTLL.

The region spanning Glu22–Ser110 is the EH 1 domain. The EF-hand 1 domain occupies Leu54–Lys89. Positions 67, 69, 71, 73, and 78 each coordinate Ca(2+). Phosphoserine is present on residues Ser110, Ser211, and Ser231. A compositionally biased stretch (low complexity) spans Ser220 to Ser231. Residues Ser220 to Pro242 are disordered. Residues Ser245 to Gly334 enclose the EH 2 domain. The EF-hand 2 domain maps to Leu278–Ala313. A disordered region spans residues Gly335–Arg382. The span at Asp339–Lys350 shows a compositional bias: polar residues. The segment covering Thr351–Arg382 has biased composition (basic and acidic residues). Residues Glu365–Ala717 are a coiled coil. Tyr554 is subject to Phosphotyrosine. Thr574 is modified (phosphothreonine). A compositionally biased stretch (basic and acidic residues) spans Lys689–Gln713. The tract at residues Lys689–Glu715 is disordered. The 62-residue stretch at Ser718–Ser779 folds into the SH3 1 domain. Position 836 is a phosphothreonine (Thr836). Ser838 and Ser843 each carry phosphoserine. An SH3 2 domain is found at Val852 to Gly910. Tyr922 is modified (phosphotyrosine). SH3 domains are found at residues Pro942–Gln1000, Lys1014–Pro1078, and His1088–Asp1147. Residues Lys1170–Gly1357 enclose the DH domain. Residues Lys1396 to Glu1506 form the PH domain. One can recognise a C2 domain in the interval Lys1514–Thr1630. Residues Asp1602, Ser1605, and Asp1608 each coordinate Ca(2+).

As to quaternary structure, belongs to a complex that may contain multimers of ITSN1, ITSN2 and EPS15, and different partners according to the step in the endocytic process. Interacts with ADAM15. Interacts with FASLG. Interacts with ANKRD54. Interacts with FCHO2. Ca(2+) is required as a cofactor. In terms of tissue distribution, widely expressed in adult tissues.

Its subcellular location is the cytoplasm. In terms of biological role, adapter protein that may provide indirect link between the endocytic membrane traffic and the actin assembly machinery. May regulate the formation of clathrin-coated vesicles (CCPs). Seems to be involved in CCPs maturation including invagination or budding. Involved in endocytosis of integrin beta-1 (ITGB1) and transferrin receptor (TFR). Plays a role in dendrite formation by melanocytes. This Mus musculus (Mouse) protein is Intersectin-2 (Itsn2).